Here is a 509-residue protein sequence, read N- to C-terminus: ATP synthase subunit beta (509 aa).

A disordered region spans residues 1-28 (MAKAATPKETAAAKKPAAPKKAASAKTA). Residue 187–194 (GGAGVGKT) coordinates ATP.

It belongs to the ATPase alpha/beta chains family. As to quaternary structure, F-type ATPases have 2 components, CF(1) - the catalytic core - and CF(0) - the membrane proton channel. CF(1) has five subunits: alpha(3), beta(3), gamma(1), delta(1), epsilon(1). CF(0) has three main subunits: a(1), b(2) and c(9-12). The alpha and beta chains form an alternating ring which encloses part of the gamma chain. CF(1) is attached to CF(0) by a central stalk formed by the gamma and epsilon chains, while a peripheral stalk is formed by the delta and b chains.

Its subcellular location is the cell inner membrane. It carries out the reaction ATP + H2O + 4 H(+)(in) = ADP + phosphate + 5 H(+)(out). Functionally, produces ATP from ADP in the presence of a proton gradient across the membrane. The catalytic sites are hosted primarily by the beta subunits. This is ATP synthase subunit beta from Sinorhizobium medicae (strain WSM419) (Ensifer medicae).